The sequence spans 565 residues: Sulfite reductase [NADPH] hemoprotein beta-component (565 aa).

Positions 429, 435, 474, and 478 each coordinate [4Fe-4S] cluster. Siroheme is bound at residue Cys478.

It belongs to the nitrite and sulfite reductase 4Fe-4S domain family. In terms of assembly, alpha(8)-beta(8). The alpha component is a flavoprotein, the beta component is a hemoprotein. Siroheme serves as cofactor. It depends on [4Fe-4S] cluster as a cofactor.

It catalyses the reaction hydrogen sulfide + 3 NADP(+) + 3 H2O = sulfite + 3 NADPH + 4 H(+). Its pathway is sulfur metabolism; hydrogen sulfide biosynthesis; hydrogen sulfide from sulfite (NADPH route): step 1/1. Functionally, component of the sulfite reductase complex that catalyzes the 6-electron reduction of sulfite to sulfide. This is one of several activities required for the biosynthesis of L-cysteine from sulfate. The protein is Sulfite reductase [NADPH] hemoprotein beta-component of Shewanella sp. (strain W3-18-1).